The chain runs to 87 residues: Small ribosomal subunit protein bS16 (87 aa).

This sequence belongs to the bacterial ribosomal protein bS16 family.

This Ehrlichia ruminantium (strain Welgevonden) protein is Small ribosomal subunit protein bS16.